A 1072-amino-acid polypeptide reads, in one-letter code: Carbamoyl phosphate synthase large chain (1072 aa).

Residues 1 to 401 (MPKRLDINTI…SLLKAVRSLE (401 aa)) form a carboxyphosphate synthetic domain region. Residues Arg-129, Arg-169, Gly-175, Gly-176, Lys-208, Ile-210, Glu-215, Gly-241, Val-242, His-243, Gln-284, and Glu-298 each coordinate ATP. The region spanning 133–327 (RTLMQELNEP…IAKLAAKIAV (195 aa)) is the ATP-grasp 1 domain. Positions 284, 298, and 300 each coordinate Mg(2+). The Mn(2+) site is built by Gln-284, Glu-298, and Asn-300. The segment at 402-546 (LGIYHLELDH…YSTYADENES (145 aa)) is oligomerization domain. The segment at 547-929 (IVTDRKSVVV…ALYKGLVASG (383 aa)) is carbamoyl phosphate synthetic domain. The ATP-grasp 2 domain occupies 671–861 (EAALTKLGIP…MANVATKVIL (191 aa)). Positions 707, 746, 752, 777, 778, 779, 780, 820, and 832 each coordinate ATP. Residues Gln-820, Glu-832, and Asn-834 each coordinate Mg(2+). Mn(2+)-binding residues include Gln-820, Glu-832, and Asn-834. One can recognise an MGS-like domain in the interval 930–1072 (INIPTHGSVI…QTKRHEVVHA (143 aa)). An allosteric domain region spans residues 930–1072 (INIPTHGSVI…QTKRHEVVHA (143 aa)).

The protein belongs to the CarB family. In terms of assembly, composed of two chains; the small (or glutamine) chain promotes the hydrolysis of glutamine to ammonia, which is used by the large (or ammonia) chain to synthesize carbamoyl phosphate. Tetramer of heterodimers (alpha,beta)4. Mg(2+) is required as a cofactor. The cofactor is Mn(2+).

The catalysed reaction is hydrogencarbonate + L-glutamine + 2 ATP + H2O = carbamoyl phosphate + L-glutamate + 2 ADP + phosphate + 2 H(+). The enzyme catalyses hydrogencarbonate + NH4(+) + 2 ATP = carbamoyl phosphate + 2 ADP + phosphate + 2 H(+). It functions in the pathway amino-acid biosynthesis; L-arginine biosynthesis; carbamoyl phosphate from bicarbonate: step 1/1. It participates in pyrimidine metabolism; UMP biosynthesis via de novo pathway; (S)-dihydroorotate from bicarbonate: step 1/3. Its function is as follows. Large subunit of the glutamine-dependent carbamoyl phosphate synthetase (CPSase). CPSase catalyzes the formation of carbamoyl phosphate from the ammonia moiety of glutamine, carbonate, and phosphate donated by ATP, constituting the first step of 2 biosynthetic pathways, one leading to arginine and/or urea and the other to pyrimidine nucleotides. The large subunit (synthetase) binds the substrates ammonia (free or transferred from glutamine from the small subunit), hydrogencarbonate and ATP and carries out an ATP-coupled ligase reaction, activating hydrogencarbonate by forming carboxy phosphate which reacts with ammonia to form carbamoyl phosphate. In Bacillus thuringiensis subsp. konkukian (strain 97-27), this protein is Carbamoyl phosphate synthase large chain.